The chain runs to 442 residues: Trigger factor (442 aa).

Positions 165–250 (DDRVIIDFEG…LQKVMAPELP (86 aa)) constitute a PPIase FKBP-type domain.

Belongs to the FKBP-type PPIase family. Tig subfamily.

The protein localises to the cytoplasm. It catalyses the reaction [protein]-peptidylproline (omega=180) = [protein]-peptidylproline (omega=0). Its function is as follows. Involved in protein export. Acts as a chaperone by maintaining the newly synthesized protein in an open conformation. Functions as a peptidyl-prolyl cis-trans isomerase. The chain is Trigger factor from Coxiella burnetii (strain RSA 493 / Nine Mile phase I).